The following is a 257-amino-acid chain: NAD-capped RNA hydrolase NudC (257 aa).

Arg69 is a substrate binding site. Zn(2+) is bound by residues Cys98 and Cys101. Glu111 contacts substrate. Zn(2+) contacts are provided by Cys116 and Cys119. Position 124 (Tyr124) interacts with substrate. One can recognise a Nudix hydrolase domain in the interval 125-248 (PQIAPCIIVA…TVARRLIEDT (124 aa)). The a divalent metal cation site is built by Ala158, Glu174, and Glu178. The Nudix box motif lies at 159-180 (GFVEVGETLEQAVAREVMEESG). 192–199 (QPWPFPQS) provides a ligand contact to substrate. Glu219 is a binding site for a divalent metal cation. Ala241 provides a ligand contact to substrate.

This sequence belongs to the Nudix hydrolase family. NudC subfamily. As to quaternary structure, homodimer. Requires Mg(2+) as cofactor. Mn(2+) is required as a cofactor. It depends on Zn(2+) as a cofactor.

It catalyses the reaction a 5'-end NAD(+)-phospho-ribonucleoside in mRNA + H2O = a 5'-end phospho-adenosine-phospho-ribonucleoside in mRNA + beta-nicotinamide D-ribonucleotide + 2 H(+). The catalysed reaction is NAD(+) + H2O = beta-nicotinamide D-ribonucleotide + AMP + 2 H(+). It carries out the reaction NADH + H2O = reduced beta-nicotinamide D-ribonucleotide + AMP + 2 H(+). Functionally, mRNA decapping enzyme that specifically removes the nicotinamide adenine dinucleotide (NAD) cap from a subset of mRNAs by hydrolyzing the diphosphate linkage to produce nicotinamide mononucleotide (NMN) and 5' monophosphate mRNA. The NAD-cap is present at the 5'-end of some mRNAs and stabilizes RNA against 5'-processing. Has preference for mRNAs with a 5'-end purine. Catalyzes the hydrolysis of a broad range of dinucleotide pyrophosphates. In Salmonella typhi, this protein is NAD-capped RNA hydrolase NudC.